A 178-amino-acid chain; its full sequence is Small ribosomal subunit protein uS4 (178 aa).

The S4 RNA-binding domain maps to Arg104–His166. A disordered region spans residues Pro157–Gln178.

The protein belongs to the universal ribosomal protein uS4 family. As to quaternary structure, part of the 30S ribosomal subunit. Contacts protein S5. The interaction surface between S4 and S5 is involved in control of translational fidelity.

One of the primary rRNA binding proteins, it binds directly to 16S rRNA where it nucleates assembly of the body of the 30S subunit. Its function is as follows. With S5 and S12 plays an important role in translational accuracy. The protein is Small ribosomal subunit protein uS4 of Methanococcus maripaludis (strain C7 / ATCC BAA-1331).